A 126-amino-acid chain; its full sequence is Anti-adapter protein IraD (126 aa).

This sequence belongs to the GpW/Gp25 family. IraD subfamily. As to quaternary structure, interacts with RssB.

It localises to the cytoplasm. Inhibits RpoS proteolysis by regulating RssB activity, thereby increasing the stability of the sigma stress factor RpoS during oxidative stress. Its effect on RpoS stability is due to its interaction with RssB, which probably blocks the interaction of RssB with RpoS, and the consequent delivery of the RssB-RpoS complex to the ClpXP protein degradation pathway. The protein is Anti-adapter protein IraD of Salmonella choleraesuis (strain SC-B67).